The sequence spans 177 residues: Large ribosomal subunit protein uL6 (177 aa).

The protein belongs to the universal ribosomal protein uL6 family. In terms of assembly, part of the 50S ribosomal subunit.

Its function is as follows. This protein binds to the 23S rRNA, and is important in its secondary structure. It is located near the subunit interface in the base of the L7/L12 stalk, and near the tRNA binding site of the peptidyltransferase center. This Cupriavidus metallidurans (strain ATCC 43123 / DSM 2839 / NBRC 102507 / CH34) (Ralstonia metallidurans) protein is Large ribosomal subunit protein uL6.